Here is a 196-residue protein sequence, read N- to C-terminus: UPF0301 protein BF2109 (196 aa).

The protein belongs to the UPF0301 (AlgH) family.

This Bacteroides fragilis (strain ATCC 25285 / DSM 2151 / CCUG 4856 / JCM 11019 / LMG 10263 / NCTC 9343 / Onslow / VPI 2553 / EN-2) protein is UPF0301 protein BF2109.